A 515-amino-acid chain; its full sequence is Maturase K (515 aa).

This sequence belongs to the intron maturase 2 family. MatK subfamily.

It localises to the plastid. The protein localises to the chloroplast. Usually encoded in the trnK tRNA gene intron. Probably assists in splicing its own and other chloroplast group II introns. The sequence is that of Maturase K from Alpinia zerumbet (Shell ginger).